A 314-amino-acid polypeptide reads, in one-letter code: DNA-directed RNA polymerase subunit alpha (314 aa).

The segment at 1–228 (MIEIEKPVIE…EHLNIFVGLT (228 aa)) is alpha N-terminal domain (alpha-NTD). The alpha C-terminal domain (alpha-CTD) stretch occupies residues 245-314 (KEKVLEMTIE…ELGLGLRKEE (70 aa)).

Belongs to the RNA polymerase alpha chain family. Homodimer. The RNAP catalytic core consists of 2 alpha, 1 beta, 1 beta' and 1 omega subunit. When a sigma factor is associated with the core the holoenzyme is formed, which can initiate transcription.

It carries out the reaction RNA(n) + a ribonucleoside 5'-triphosphate = RNA(n+1) + diphosphate. DNA-dependent RNA polymerase catalyzes the transcription of DNA into RNA using the four ribonucleoside triphosphates as substrates. The protein is DNA-directed RNA polymerase subunit alpha of Halalkalibacterium halodurans (strain ATCC BAA-125 / DSM 18197 / FERM 7344 / JCM 9153 / C-125) (Bacillus halodurans).